The following is a 1259-amino-acid chain: Trafficking protein particle complex II-specific subunit 130 homolog (1259 aa).

A2 is subject to N-acetylalanine. The disordered stretch occupies residues 479 to 526 (GNIPEMFDGRPSFTEGSGLEASPRTPSSLKVQAPPMSRTNSSPGNFES).

It belongs to the TMEM1 family. In terms of assembly, part of the multisubunit TRAPP (transport protein particle) II complex composed of BET3, BET5, TRS20, TRS23, TRS31, TRS33, TRS65, TRS85, TRS120 and TRS130.

It localises to the golgi apparatus. Its subcellular location is the trans-Golgi network. The protein resides in the early endosome. Functionally, specific subunit of the TRAPP II complex, a highly conserved vesicle tethering complex that is required for the proper transport of proteins in post-Golgi trafficking pathways to the growing cell plate in mitotic active cells. Required for the polarized and selective transport of PIN2, but not PIN1, to the plasma membrane. Not required for ER-to-Golgi as well as biosynthetic and endocytic vacuolar transport. This Arabidopsis thaliana (Mouse-ear cress) protein is Trafficking protein particle complex II-specific subunit 130 homolog.